The chain runs to 347 residues: GDT1-like protein 2, chloroplastic (347 aa).

A chloroplast-targeting transit peptide spans 1 to 12 (MATAISVGVAVP). Residues 70-97 (EAGSHGEHLDSSATRDSNKPTKPPSGSR) form a disordered region. The next 7 membrane-spanning stretches (helical) occupy residues 99–119 (PQSIAAVLLLCALASAFIVFF), 124–144 (SAVVAMLAKSGFTAAFTLIFV), 165–185 (ALVLLGSMAALSLMTIVSVII), 196–216 (FQTTLPIGEYAAIALLAFFGF), 257–277 (LTSPLEVLWKSFSLVFFAEWG), 299–319 (GAIAGHLVATFLAIVGGAFLA), and 327–347 (VGLIGGVLFLLFAVATFFGVF).

Belongs to the GDT1 family.

The protein localises to the plastid. The protein resides in the chloroplast membrane. The polypeptide is GDT1-like protein 2, chloroplastic (Oryza sativa subsp. japonica (Rice)).